We begin with the raw amino-acid sequence, 329 residues long: MKIIFAGTPEFARVALERLLAAGAEVPLVLTQPDRPAGRGMKLQASPVKQCALAHGIAVAQPRGLRLDGRYAEDAAAARAALEAAGADAMVVAAYGLILPQWVLDLPRLGCLNIHASLLPRWRGAAPIHRAIEAGDAETGVTIMQMDAGLDTGAMLLIEKTAIAPRETTATLHDRLADLGGRLIVEAMELAACGGLAATPQPAEGVTYAHKIEKAESAIDWKLPAAAIDRRVRAFDPFPGASTQCSAETIKVWGCEPLQVPPPEGAQPGEILQVDDAGVDVACGGPDGAAGVLRLTVLQRAGGKRLPVGDFLRGHPLAPGMVLGGGAGA.

Residue 117–120 participates in (6S)-5,6,7,8-tetrahydrofolate binding; sequence SLLP.

The protein belongs to the Fmt family.

It carries out the reaction L-methionyl-tRNA(fMet) + (6R)-10-formyltetrahydrofolate = N-formyl-L-methionyl-tRNA(fMet) + (6S)-5,6,7,8-tetrahydrofolate + H(+). Attaches a formyl group to the free amino group of methionyl-tRNA(fMet). The formyl group appears to play a dual role in the initiator identity of N-formylmethionyl-tRNA by promoting its recognition by IF2 and preventing the misappropriation of this tRNA by the elongation apparatus. The protein is Methionyl-tRNA formyltransferase of Paracidovorax citrulli (strain AAC00-1) (Acidovorax citrulli).